Reading from the N-terminus, the 505-residue chain is Putative diacyglycerol O-acyltransferase MT0919 (505 aa).

The active-site Proton acceptor is the histidine 167.

Belongs to the long-chain O-acyltransferase family.

It catalyses the reaction an acyl-CoA + a 1,2-diacyl-sn-glycerol = a triacyl-sn-glycerol + CoA. Its pathway is glycerolipid metabolism; triacylglycerol biosynthesis. The chain is Putative diacyglycerol O-acyltransferase MT0919 from Mycobacterium tuberculosis (strain CDC 1551 / Oshkosh).